The chain runs to 185 residues: Elongation factor P (185 aa).

The protein belongs to the elongation factor P family.

Its subcellular location is the cytoplasm. It functions in the pathway protein biosynthesis; polypeptide chain elongation. Functionally, involved in peptide bond synthesis. Stimulates efficient translation and peptide-bond synthesis on native or reconstituted 70S ribosomes in vitro. Probably functions indirectly by altering the affinity of the ribosome for aminoacyl-tRNA, thus increasing their reactivity as acceptors for peptidyl transferase. The chain is Elongation factor P from Paraburkholderia phymatum (strain DSM 17167 / CIP 108236 / LMG 21445 / STM815) (Burkholderia phymatum).